Reading from the N-terminus, the 511-residue chain is MEEMTPAVAMTLSLAANTMCESSPVEITQLKNVTDAADLLSDSENQSFCNGGTECTMEDVSELEEVGEQDLLKTLSDTRSGSSNVFDEDDVLSVVEDNSAVISEGLLVVDAGSELSLSNTAMEIDNGRVLATAIIVGESSIEQVPTAEVLIAGVNQDTNTSEVVIRLPDENSNHLVKGRSVYELDCIPLWGTVSIQGNRSEMEDAFAVSPHFLKLPIKMLMGDHEGMSPSLTHLTGHFFGVYDGHGGHKVADYCRDRLHFALAEEIERIKDELCKRNTGEGRQVQWDKVFTSCFLTVDGEIEGKIGRAVVGSSDKVLEAVASETVGSTAVVALVCSSHIVVSNCGDSRAVLFRGKEAMPLSVDHKPDREDEYARIENAGGKVIQWQGARVFGVLAMSRSIGDRYLKPYVIPEPEVTFMPRSREDECLILASDGLWDVMNNQEVCEIARRRILMWHKKNGAPPLAERGKGIDPACQAAADYLSMLALQKGSKDNISIIVIDLKAQRKFKTRT.

Positions 1 to 22 are cleaved as a signal peptide; the sequence is MEEMTPAVAMTLSLAANTMCES. The PPM-type phosphatase domain maps to 189–501; that stretch reads LWGTVSIQGN…DNISIIVIDL (313 aa). Mn(2+)-binding residues include Asp243, Gly244, Asp432, and Asp492.

This sequence belongs to the PP2C family. Interacts with SWI3B (via N-terminus). Interacts with ABA-bounded PYR1, PYL1, PYL2, PYL3, PYL4, PYL5, PYL6, PYL8 and PYL9, and with free PYL2, PYL3, PYL4, PYL10 and PYL13. It depends on Mg(2+) as a cofactor. Mn(2+) serves as cofactor. In terms of tissue distribution, expressed in seeds, roots, stems, leaves and flowers, especially in meristematic tissues, guard cells, embryo and siliques.

The protein resides in the cytoplasm. The protein localises to the nucleus. The catalysed reaction is O-phospho-L-seryl-[protein] + H2O = L-seryl-[protein] + phosphate. It catalyses the reaction O-phospho-L-threonyl-[protein] + H2O = L-threonyl-[protein] + phosphate. Its activity is regulated as follows. Repressed by PYR/PYL/RCAR ABA receptors in an ABA-dependent manner. Key component and repressor of the abscisic acid (ABA) signaling pathway that regulates numerous ABA responses, such as stomatal closure, seed germination and inhibition of vegetative growth. Confers enhanced sensitivity to drought. In Arabidopsis thaliana (Mouse-ear cress), this protein is Protein phosphatase 2C 16 (HAB1).